Reading from the N-terminus, the 546-residue chain is DDB1- and CUL4-associated factor 11 (546 aa).

The span at 1 to 19 shows a compositional bias: low complexity; that stretch reads MGSRNSSSAGSGSGDPSEG. The interval 1–40 is disordered; the sequence is MGSRNSSSAGSGSGDPSEGLTRRGAGLRRSEEEEEEDEDV. A Phosphoserine modification is found at serine 75. WD repeat units follow at residues 170–210, 216–258, 263–302, 305–345, 353–392, 435–480, and 481–520; these read SYSQ…RKFK, DVGW…TALD, ERRF…RTLQ, SHED…EDDP, GHQD…SREG, GVLH…KKLT, and NHKA…YFQD. The tract at residues 523–546 is disordered; that stretch reads PESEECASAPAPVPRSSTPFSSPQ. The span at 537-546 shows a compositional bias: polar residues; it reads RSSTPFSSPQ.

Interacts with DDB1 and CUL4A.

It functions in the pathway protein modification; protein ubiquitination. May function as a substrate receptor for CUL4-DDB1 E3 ubiquitin-protein ligase complex. This chain is DDB1- and CUL4-associated factor 11 (DCAF11), found in Pongo abelii (Sumatran orangutan).